We begin with the raw amino-acid sequence, 175 residues long: Large ribosomal subunit protein uL10 (175 aa).

Belongs to the universal ribosomal protein uL10 family. Part of the ribosomal stalk of the 50S ribosomal subunit. The N-terminus interacts with L11 and the large rRNA to form the base of the stalk. The C-terminus forms an elongated spine to which L12 dimers bind in a sequential fashion forming a multimeric L10(L12)X complex.

Forms part of the ribosomal stalk, playing a central role in the interaction of the ribosome with GTP-bound translation factors. The chain is Large ribosomal subunit protein uL10 from Synechococcus sp. (strain WH7803).